Consider the following 439-residue polypeptide: Tol-Pal system protein TolB (439 aa).

An N-terminal signal peptide occupies residues 1–24 (MRNGMRKIIAGVFIFVFLISNLYA).

Belongs to the TolB family. In terms of assembly, the Tol-Pal system is composed of five core proteins: the inner membrane proteins TolA, TolQ and TolR, the periplasmic protein TolB and the outer membrane protein Pal. They form a network linking the inner and outer membranes and the peptidoglycan layer.

The protein resides in the periplasm. Functionally, part of the Tol-Pal system, which plays a role in outer membrane invagination during cell division and is important for maintaining outer membrane integrity. This chain is Tol-Pal system protein TolB, found in Francisella tularensis subsp. tularensis (strain FSC 198).